The sequence spans 298 residues: N-acetylmuramic acid 6-phosphate etherase (298 aa).

One can recognise an SIS domain in the interval 55–218 (AANRYKKGGR…STGVMIRQGK (164 aa)). Glu-83 (proton donor) is an active-site residue. Glu-114 is an active-site residue.

Belongs to the GCKR-like family. MurNAc-6-P etherase subfamily. In terms of assembly, homodimer.

It carries out the reaction N-acetyl-D-muramate 6-phosphate + H2O = N-acetyl-D-glucosamine 6-phosphate + (R)-lactate. It participates in amino-sugar metabolism; N-acetylmuramate degradation. In terms of biological role, specifically catalyzes the cleavage of the D-lactyl ether substituent of MurNAc 6-phosphate, producing GlcNAc 6-phosphate and D-lactate. This is N-acetylmuramic acid 6-phosphate etherase from Lactobacillus acidophilus (strain ATCC 700396 / NCK56 / N2 / NCFM).